Reading from the N-terminus, the 1038-residue chain is Importin-7 (1038 aa).

At methionine 1 the chain carries N-acetylmethionine. In terms of domain architecture, Importin N-terminal spans 22-101 (AERQLNEAHK…RENIVEAIIH (80 aa)). A disordered region spans residues 881-910 (EHENDSDDDEDAEDDDETEELGSDEDDIDE). Positions 884–910 (NDSDDDEDAEDDDETEELGSDEDDIDE) are enriched in acidic residues. At serine 886 the chain carries Phosphoserine. Residue threonine 898 is modified to Phosphothreonine. 2 positions are modified to phosphoserine: serine 903 and serine 1020.

The protein belongs to the importin beta family. As to quaternary structure, forms a heterodimer with KPNB1. Interacts with histone H1. Interacts with H2A, H2B, H3 and H4 histones. Interacts with SNUPN and XPO1. Interacts with RPS7 and RPL5. Interacts with RPL23A (via BIB domain). Binds directly to nuclear pore complexes. Interacts with SMAD4 and NUP93; translocates SMAD4 to the nucleus through the NPC upon BMP7 stimulation resulting in activation of SMAD4 signaling. Interacts with phosphorylated SMAD2; the interaction facilitates translocation of SMAD2 to the nucleus. Interacts with SRP19. Interacts with RUNX2; the interaction inhibits RUNX2 nuclear translocation in osteoblasts. Interacts with HDAC6, DLX3 and KLF4; the interaction facilitates HDAC6, DLX3 and KLF4 nuclear translocation in dental papilla cells.

It is found in the cytoplasm. The protein localises to the nucleus. Its function is as follows. Functions in nuclear protein import, either by acting as autonomous nuclear transport receptor or as an adapter-like protein in association with the importin-beta subunit KPNB1. Acting autonomously is thought to serve itself as receptor for nuclear localization signals (NLS) and to promote translocation of import substrates through the nuclear pore complex (NPC) by an energy requiring, Ran-dependent mechanism. At the nucleoplasmic side of the NPC, Ran binds to importin, the importin/substrate complex dissociates and importin is re-exported from the nucleus to the cytoplasm where GTP hydrolysis releases Ran. Mediates autonomously the nuclear import of ribosomal proteins RPL23A, RPS7 and RPL5. In association with KPNB1 mediates the nuclear import of H1 histone and the Ran-binding site of IPO7 is not required but synergizes with that of KPNB1 in importin/substrate complex dissociation. Promotes odontoblast differentiation via promoting nuclear translocation of DLX3, KLF4, SMAD2, thereby facilitating the transcription of target genes that play a role in odontoblast differentiation. Facilitates BMP4-induced translocation of SMAD1 to the nucleus and recruitment to the MSX1 gene promoter, thereby promotes the expression of the odontogenic regulator MSX1 in dental mesenchymal cells. Also promotes odontoblast differentiation by facilitating the nuclear translocation of HDAC6 and subsequent repression of RUNX2 expression. Inhibits osteoblast differentiation by inhibiting nuclear translocation of RUNX2 and therefore inhibition of RUNX2 target gene transcription. In vitro, mediates nuclear import of H2A, H2B, H3 and H4 histones. This chain is Importin-7 (Ipo7), found in Mus musculus (Mouse).